The sequence spans 136 residues: Large-conductance mechanosensitive channel (136 aa).

Transmembrane regions (helical) follow at residues 9 to 29 (AFAV…GAAF) and 78 to 98 (FIQT…GVKA).

It belongs to the MscL family. As to quaternary structure, homopentamer.

The protein localises to the cell inner membrane. Functionally, channel that opens in response to stretch forces in the membrane lipid bilayer. May participate in the regulation of osmotic pressure changes within the cell. The protein is Large-conductance mechanosensitive channel of Azotobacter vinelandii (strain DJ / ATCC BAA-1303).